The following is a 427-amino-acid chain: 3-phosphoshikimate 1-carboxyvinyltransferase (427 aa).

3-phosphoshikimate-binding residues include lysine 22, serine 23, and arginine 27. Lysine 22 serves as a coordination point for phosphoenolpyruvate. Phosphoenolpyruvate-binding residues include glycine 96 and arginine 124. 3-phosphoshikimate-binding residues include serine 169, serine 170, glutamine 171, serine 197, aspartate 313, asparagine 336, and lysine 340. Position 171 (glutamine 171) interacts with phosphoenolpyruvate. Aspartate 313 serves as the catalytic Proton acceptor. Phosphoenolpyruvate-binding residues include arginine 344, arginine 386, and lysine 411.

The protein belongs to the EPSP synthase family. In terms of assembly, monomer.

Its subcellular location is the cytoplasm. It carries out the reaction 3-phosphoshikimate + phosphoenolpyruvate = 5-O-(1-carboxyvinyl)-3-phosphoshikimate + phosphate. It participates in metabolic intermediate biosynthesis; chorismate biosynthesis; chorismate from D-erythrose 4-phosphate and phosphoenolpyruvate: step 6/7. Catalyzes the transfer of the enolpyruvyl moiety of phosphoenolpyruvate (PEP) to the 5-hydroxyl of shikimate-3-phosphate (S3P) to produce enolpyruvyl shikimate-3-phosphate and inorganic phosphate. In Escherichia coli (strain SMS-3-5 / SECEC), this protein is 3-phosphoshikimate 1-carboxyvinyltransferase.